Here is a 743-residue protein sequence, read N- to C-terminus: Threonine synthase-like 1 (743 aa).

Lysine 281 is modified (N6-acetyllysine). Lysine 351 carries the post-translational modification N6-(pyridoxal phosphate)lysine.

This sequence belongs to the threonine synthase family. It depends on pyridoxal 5'-phosphate as a cofactor.

This chain is Threonine synthase-like 1 (THNSL1), found in Homo sapiens (Human).